The primary structure comprises 96 residues: MSRRCELSGKAVMSGNNVSHANRKTRRRFLPNLCQVTLISDALGRQFSLRVSAHALRSVEHNGGLDPFLLKASDAQLSSRALKLKRAIEKVQAVAA.

Belongs to the bacterial ribosomal protein bL28 family.

The polypeptide is Large ribosomal subunit protein bL28 (Parvibaculum lavamentivorans (strain DS-1 / DSM 13023 / NCIMB 13966)).